The sequence spans 815 residues: Tubulin polyglutamylase TTLL13 (815 aa).

One can recognise a TTL domain in the interval 85–430 (RRSLAINLTN…RGCDKRKVME (346 aa)). Residues K202, 208–209 (QG), 230–233 (QQYI), and 243–245 (KFD) each bind ATP. Q208 contributes to the a protein binding site. R269 lines the L-glutamate pocket. An ATP-binding site is contributed by 291–292 (TN). L-glutamate-binding residues include Y293 and K311. The Mg(2+) site is built by D376, E389, and N391. The segment at 401–482 (CLDQEVKDAL…LGKYRRIYPG (82 aa)) is c-MTBD region. K407 lines the L-glutamate pocket. A coiled-coil region spans residues 504–528 (ASKAREECARQQLEEIRLKQEQQET). Residues 520 to 556 (RLKQEQQETSGTKRQKARDQNQGESAGEKSRPRAGLQ) form a disordered region. A compositionally biased stretch (basic and acidic residues) spans 536-550 (ARDQNQGESAGEKSR).

The protein belongs to the tubulin--tyrosine ligase family. Mg(2+) serves as cofactor.

The enzyme catalyses (L-glutamyl)(n)-gamma-L-glutamyl-L-glutamyl-[protein] + L-glutamate + ATP = (L-glutamyl)(n+1)-gamma-L-glutamyl-L-glutamyl-[protein] + ADP + phosphate + H(+). Functionally, polyglutamylase which modifies tubulin, generating polyglutamate side chains of variable lengths on the gamma-carboxyl group of specific glutamate residues within the C-terminal tail of tubulin. Mediates ATP-dependent polyglutamate side-chain elongation of the polyglutamylation reaction but not the initiation step. Preferentially modifies the alpha-tubulin tail over a beta-tail. The chain is Tubulin polyglutamylase TTLL13 from Homo sapiens (Human).